A 208-amino-acid chain; its full sequence is Imidazoleglycerol-phosphate dehydratase (208 aa).

The disordered stretch occupies residues 1–22 (MTEDTETSSTGAGADDRTAAIS).

This sequence belongs to the imidazoleglycerol-phosphate dehydratase family.

The protein resides in the cytoplasm. It catalyses the reaction D-erythro-1-(imidazol-4-yl)glycerol 3-phosphate = 3-(imidazol-4-yl)-2-oxopropyl phosphate + H2O. Its pathway is amino-acid biosynthesis; L-histidine biosynthesis; L-histidine from 5-phospho-alpha-D-ribose 1-diphosphate: step 6/9. The polypeptide is Imidazoleglycerol-phosphate dehydratase (Haloquadratum walsbyi (strain DSM 16790 / HBSQ001)).